We begin with the raw amino-acid sequence, 170 residues long: Photosystem I assembly protein Ycf3 (170 aa).

TPR repeat units lie at residues 35-68 (AFTY…EIDP), 72-105 (SYIL…NPFL), and 120-153 (GEQA…TPGN).

The protein belongs to the Ycf3 family.

The protein resides in the plastid. It localises to the chloroplast thylakoid membrane. Functionally, essential for the assembly of the photosystem I (PSI) complex. May act as a chaperone-like factor to guide the assembly of the PSI subunits. The protein is Photosystem I assembly protein Ycf3 of Oryza nivara (Indian wild rice).